The primary structure comprises 264 residues: Acetylglutamate kinase (264 aa).

Substrate contacts are provided by residues 50 to 51 (GG), R72, and N164.

The protein belongs to the acetylglutamate kinase family. ArgB subfamily.

Its subcellular location is the cytoplasm. It carries out the reaction N-acetyl-L-glutamate + ATP = N-acetyl-L-glutamyl 5-phosphate + ADP. Its pathway is amino-acid biosynthesis; L-arginine biosynthesis; N(2)-acetyl-L-ornithine from L-glutamate: step 2/4. Its function is as follows. Catalyzes the ATP-dependent phosphorylation of N-acetyl-L-glutamate. The protein is Acetylglutamate kinase of Moritella profunda.